The sequence spans 48 residues: Large ribosomal subunit protein bL34c (48 aa).

This sequence belongs to the bacterial ribosomal protein bL34 family.

The protein resides in the plastid. It is found in the chloroplast. In Thalassiosira pseudonana (Marine diatom), this protein is Large ribosomal subunit protein bL34c.